Reading from the N-terminus, the 100-residue chain is Large ribosomal subunit protein uL23 (100 aa).

This sequence belongs to the universal ribosomal protein uL23 family. In terms of assembly, part of the 50S ribosomal subunit. Contacts protein L29, and trigger factor when it is bound to the ribosome.

Functionally, one of the early assembly proteins it binds 23S rRNA. One of the proteins that surrounds the polypeptide exit tunnel on the outside of the ribosome. Forms the main docking site for trigger factor binding to the ribosome. The chain is Large ribosomal subunit protein uL23 from Vibrio vulnificus (strain CMCP6).